Here is an 88-residue protein sequence, read N- to C-terminus: MSKEDMIELEGVVIEMLPESRFRVRLDNNMEILAYGSGKMKMHRIRVLLGDRVTVEMSPYDLTKGRINFRHPTANPGAGPRPSHHHRR.

The S1-like domain occupies methionine 1–proline 72. A disordered region spans residues arginine 66–arginine 88.

The protein belongs to the IF-1 family. As to quaternary structure, component of the 30S ribosomal translation pre-initiation complex which assembles on the 30S ribosome in the order IF-2 and IF-3, IF-1 and N-formylmethionyl-tRNA(fMet); mRNA recruitment can occur at any time during PIC assembly.

Its subcellular location is the cytoplasm. In terms of biological role, one of the essential components for the initiation of protein synthesis. Stabilizes the binding of IF-2 and IF-3 on the 30S subunit to which N-formylmethionyl-tRNA(fMet) subsequently binds. Helps modulate mRNA selection, yielding the 30S pre-initiation complex (PIC). Upon addition of the 50S ribosomal subunit IF-1, IF-2 and IF-3 are released leaving the mature 70S translation initiation complex. The chain is Translation initiation factor IF-1 1 from Chromobacterium violaceum (strain ATCC 12472 / DSM 30191 / JCM 1249 / CCUG 213 / NBRC 12614 / NCIMB 9131 / NCTC 9757 / MK).